A 134-amino-acid chain; its full sequence is Large-conductance mechanosensitive channel (134 aa).

The next 2 membrane-spanning stretches (helical) occupy residues 10 to 30 and 76 to 96; these read FAMRGNVVDLAVGIIIGGAFG and GAFLQTIVDFVIIAFSIFVVI.

The protein belongs to the MscL family. As to quaternary structure, homopentamer.

It is found in the cell inner membrane. Functionally, channel that opens in response to stretch forces in the membrane lipid bilayer. May participate in the regulation of osmotic pressure changes within the cell. This Prosthecochloris aestuarii (strain DSM 271 / SK 413) protein is Large-conductance mechanosensitive channel.